Here is a 236-residue protein sequence, read N- to C-terminus: Rho-related GTP-binding protein RhoV (236 aa).

The segment at 1 to 27 (MPPRELSEAESSPLRSPTPPPGRGSAS) is disordered. At Ser25 the chain carries Phosphoserine. GTP is bound by residues 38-45 (GDGAVGKS), 85-89 (DTAGQ), and 143-146 (TQAD). Cys234 is lipidated: S-palmitoyl cysteine.

The protein belongs to the small GTPase superfamily. Rho family. As to quaternary structure, interacts with PAK2. It depends on Mg(2+) as a cofactor.

The protein localises to the cell membrane. It localises to the endosome membrane. In terms of biological role, plays a role in the control of the actin cytoskeleton via activation of the JNK pathway. The chain is Rho-related GTP-binding protein RhoV from Bos taurus (Bovine).